The following is a 159-amino-acid chain: Ribosomal RNA large subunit methyltransferase H (159 aa).

Residues leucine 76, glycine 108, and 127-132 contribute to the S-adenosyl-L-methionine site; that span reads FSNMTF.

This sequence belongs to the RNA methyltransferase RlmH family. As to quaternary structure, homodimer.

It is found in the cytoplasm. The enzyme catalyses pseudouridine(1915) in 23S rRNA + S-adenosyl-L-methionine = N(3)-methylpseudouridine(1915) in 23S rRNA + S-adenosyl-L-homocysteine + H(+). In terms of biological role, specifically methylates the pseudouridine at position 1915 (m3Psi1915) in 23S rRNA. The sequence is that of Ribosomal RNA large subunit methyltransferase H from Staphylococcus epidermidis (strain ATCC 35984 / DSM 28319 / BCRC 17069 / CCUG 31568 / BM 3577 / RP62A).